The following is a 380-amino-acid chain: Rab9 effector protein with kelch motifs (380 aa).

Kelch repeat units lie at residues 57 to 103 (KIFI…FLPS), 108 to 154 (SIWV…TSSA), 159 to 211 (QLYV…AAGT), 212 to 258 (KLFI…AAVA), 262 to 311 (HVYM…VIPW), and 357 to 380 (LCFV…TVVD).

In terms of assembly, interacts with PIKFYVE; the interaction recruits RABEPK to the endosomal membrane. Interacts with RAB9 in its GTP-bound conformation. Phosphorylated on Ser residues by PIKFYVE.

The protein localises to the cytoplasm. It localises to the endosome membrane. Functionally, rab9 effector required for endosome to trans-Golgi network (TGN) transport. This chain is Rab9 effector protein with kelch motifs, found in Mus musculus (Mouse).